The sequence spans 314 residues: 4-hydroxy-3-methylbut-2-enyl diphosphate reductase (314 aa).

C12 lines the [4Fe-4S] cluster pocket. (2E)-4-hydroxy-3-methylbut-2-enyl diphosphate is bound by residues H43 and H81. Dimethylallyl diphosphate contacts are provided by H43 and H81. H43 and H81 together coordinate isopentenyl diphosphate. C103 lines the [4Fe-4S] cluster pocket. Residue H131 participates in (2E)-4-hydroxy-3-methylbut-2-enyl diphosphate binding. A dimethylallyl diphosphate-binding site is contributed by H131. H131 contacts isopentenyl diphosphate. E133 acts as the Proton donor in catalysis. T170 is a (2E)-4-hydroxy-3-methylbut-2-enyl diphosphate binding site. Residue C198 coordinates [4Fe-4S] cluster. 3 residues coordinate (2E)-4-hydroxy-3-methylbut-2-enyl diphosphate: S226, N228, and S271. Positions 226, 228, and 271 each coordinate dimethylallyl diphosphate. S226, N228, and S271 together coordinate isopentenyl diphosphate.

Belongs to the IspH family. Requires [4Fe-4S] cluster as cofactor.

It catalyses the reaction isopentenyl diphosphate + 2 oxidized [2Fe-2S]-[ferredoxin] + H2O = (2E)-4-hydroxy-3-methylbut-2-enyl diphosphate + 2 reduced [2Fe-2S]-[ferredoxin] + 2 H(+). The enzyme catalyses dimethylallyl diphosphate + 2 oxidized [2Fe-2S]-[ferredoxin] + H2O = (2E)-4-hydroxy-3-methylbut-2-enyl diphosphate + 2 reduced [2Fe-2S]-[ferredoxin] + 2 H(+). It participates in isoprenoid biosynthesis; dimethylallyl diphosphate biosynthesis; dimethylallyl diphosphate from (2E)-4-hydroxy-3-methylbutenyl diphosphate: step 1/1. Its pathway is isoprenoid biosynthesis; isopentenyl diphosphate biosynthesis via DXP pathway; isopentenyl diphosphate from 1-deoxy-D-xylulose 5-phosphate: step 6/6. Functionally, catalyzes the conversion of 1-hydroxy-2-methyl-2-(E)-butenyl 4-diphosphate (HMBPP) into a mixture of isopentenyl diphosphate (IPP) and dimethylallyl diphosphate (DMAPP). Acts in the terminal step of the DOXP/MEP pathway for isoprenoid precursor biosynthesis. The chain is 4-hydroxy-3-methylbut-2-enyl diphosphate reductase from Bacillus licheniformis (strain ATCC 14580 / DSM 13 / JCM 2505 / CCUG 7422 / NBRC 12200 / NCIMB 9375 / NCTC 10341 / NRRL NRS-1264 / Gibson 46).